We begin with the raw amino-acid sequence, 155 residues long: Nucleosome assembly protein 1-like 5 (155 aa).

Residues 1-16 (MADPEKQGPAESRAED) show a composition bias toward basic and acidic residues. The segment at 1 to 60 (MADPEKQGPAESRAEDEVMEGAQGGEDAATGDSATAPAAEEPQAPAENAPKPKNDFIESL) is disordered. Positions 27 to 49 (DAATGDSATAPAAEEPQAPAENA) are enriched in low complexity. Positions 68–94 (VLALKKLQKRCDKIEAKFDKEFQALEK) form a coiled coil. A disordered region spans residues 119 to 155 (WTLEGEDDEDDEEEEDEEEEEEEAAAGATGGPDSAEK). Residues 122-142 (EGEDDEDDEEEEDEEEEEEEA) are compositionally biased toward acidic residues.

It belongs to the nucleosome assembly protein (NAP) family.

The protein resides in the nucleus. The polypeptide is Nucleosome assembly protein 1-like 5 (Nap1l5) (Rattus norvegicus (Rat)).